We begin with the raw amino-acid sequence, 411 residues long: Lissencephaly-1 homolog (411 aa).

One can recognise a LisH domain in the interval 9–41 (QREELNQAIADYLGSNGYADSLEAFRKEADLST). The stretch at 56–83 (TSVIRLQKKVMELEAKLTEAEKEVIEGA) forms a coiled coil. 7 WD repeats span residues 106–147 (GHRA…RSLK), 148–187 (GHTDSVQDVAFDAQGKLLASCSADLSIKLWDFQQTYECVK), 191–230 (GHDHNVSSVAFVPAGDYVLSASRDRTVKMWEVATGYCVKT), 233–272 (GHREWVRMVRVHIEGSIFATCSNDHTIRVWLTNSRDCKVE), 275–334 (DHEH…CLFT), 337–376 (GHDNWVRGLAFHPAGKYLVSASDDKTIRVWDLRNKRCMKT), and 379–411 (AHQHFCTSIDFHKAHPYVISGSVDQTVKVWECR).

This sequence belongs to the WD repeat LIS1/nudF family.

It is found in the cytoplasm. It localises to the cytoskeleton. The protein resides in the microtubule organizing center. The protein localises to the centrosome. In terms of biological role, positively regulates the activity of the minus-end directed microtubule motor protein dynein. May enhance dynein-mediated microtubule sliding by targeting dynein to the microtubule plus end. Required for several dynein- and microtubule-dependent processes. In Drosophila ananassae (Fruit fly), this protein is Lissencephaly-1 homolog.